The chain runs to 59 residues: Large ribosomal subunit protein uL30 (59 aa).

It belongs to the universal ribosomal protein uL30 family. As to quaternary structure, part of the 50S ribosomal subunit.

The polypeptide is Large ribosomal subunit protein uL30 (Mycobacterium sp. (strain JLS)).